We begin with the raw amino-acid sequence, 518 residues long: Protein nucleotidyltransferase YdiU (518 aa).

A compositionally biased stretch (basic and acidic residues) spans 1-10; sequence MTHLRFDNRL. Residues 1–23 form a disordered region; the sequence is MTHLRFDNRLRQQLPGDPEEGSR. Positions 100, 102, 103, 123, 135, 136, 193, and 200 each coordinate ATP. Asp270 (proton acceptor) is an active-site residue. 2 residues coordinate Mg(2+): Asn271 and Asp280. Asp280 contributes to the ATP binding site.

It belongs to the SELO family. Requires Mg(2+) as cofactor. The cofactor is Mn(2+).

It carries out the reaction L-seryl-[protein] + ATP = 3-O-(5'-adenylyl)-L-seryl-[protein] + diphosphate. The enzyme catalyses L-threonyl-[protein] + ATP = 3-O-(5'-adenylyl)-L-threonyl-[protein] + diphosphate. The catalysed reaction is L-tyrosyl-[protein] + ATP = O-(5'-adenylyl)-L-tyrosyl-[protein] + diphosphate. It catalyses the reaction L-histidyl-[protein] + UTP = N(tele)-(5'-uridylyl)-L-histidyl-[protein] + diphosphate. It carries out the reaction L-seryl-[protein] + UTP = O-(5'-uridylyl)-L-seryl-[protein] + diphosphate. The enzyme catalyses L-tyrosyl-[protein] + UTP = O-(5'-uridylyl)-L-tyrosyl-[protein] + diphosphate. Its function is as follows. Nucleotidyltransferase involved in the post-translational modification of proteins. It can catalyze the addition of adenosine monophosphate (AMP) or uridine monophosphate (UMP) to a protein, resulting in modifications known as AMPylation and UMPylation. The polypeptide is Protein nucleotidyltransferase YdiU (Xanthomonas axonopodis pv. citri (strain 306)).